We begin with the raw amino-acid sequence, 87 residues long: Small ribosomal subunit protein bS20 (87 aa).

A disordered region spans residues 1–29 (MANTAQARKRARQAVKQNAHNSSQRSTLR). Residues 20–29 (HNSSQRSTLR) are compositionally biased toward polar residues.

This sequence belongs to the bacterial ribosomal protein bS20 family.

Binds directly to 16S ribosomal RNA. The polypeptide is Small ribosomal subunit protein bS20 (Janthinobacterium sp. (strain Marseille) (Minibacterium massiliensis)).